The chain runs to 989 residues: E3 ubiquitin-protein ligase Arkadia (989 aa).

Residues K19, K33, K46, K58, K72, K86, K95, and K109 each participate in a glycyl lysine isopeptide (Lys-Gly) (interchain with G-Cter in SUMO2) cross-link. The disordered stretch occupies residues 63–195 (FSHLCDDSQK…TEADPVPSLL (133 aa)). Basic and acidic residues predominate over residues 65–88 (HLCDDSQKQEKDMTGNQQEQEKSG). Residues 97–109 (QQAGPSYVQNCVK) are compositionally biased toward polar residues. Residues 110 to 120 (ENQEILGRRQQ) are compositionally biased toward basic and acidic residues. Residues 131–144 (SSLSECLSSPSSSL) are compositionally biased toward low complexity. Residue K172 forms a Glycyl lysine isopeptide (Lys-Gly) (interchain with G-Cter in SUMO2) linkage. The segment covering 173–183 (SRSHSARSHKW) has biased composition (basic residues). Residues K197 and K217 each participate in a glycyl lysine isopeptide (Lys-Gly) (interchain with G-Cter in SUMO2) cross-link. The segment at 213–293 (KRLVKSSSSQ…PSNPAAPSGS (81 aa)) is disordered. Positions 240-402 (ALAQRKYALL…VPTTSARMDS (163 aa)) are interaction with AXIN1. 2 stretches are compositionally biased toward low complexity: residues 248 to 270 (LLSSSSSSSENDLSSDSSSSSST) and 278 to 291 (ASASENPSNPAAPS). Positions 298–302 (VVVIE) match the SUMO interaction motif 1 (SIM) motif. The SUMO interaction motif 2 (SIM) motif lies at 323–329 (EVEIVTV). The disordered stretch occupies residues 335–367 (SRSTLGHSRSHWSQGSSSHTGRPQESRNRSRIS). The span at 345–355 (HWSQGSSSHTG) shows a compositional bias: low complexity. Residues 380–384 (VVDLT) carry the SUMO interaction motif 3 (SIM) motif. 3 disordered regions span residues 388–475 (DEPT…MPRL), 506–559 (HGHH…YHDQ), and 641–675 (MPPPYASLTRPLHHQASACHHSHGNAPPQTQPPPQ). Over residues 393-451 (VPTTSARMDSQTTSASINNSNPSTSEQASDTTSTVASSQPSTVSETEATLTSNSATGSS) the composition is skewed to polar residues. Basic residues predominate over residues 506 to 520 (HGHHFQHHHHHHHTP). Residues 548–558 (ANSSSGSSYHD) show a composition bias toward polar residues. The interval 902–904 (YPH) is ubiquitin binding. Glycyl lysine isopeptide (Lys-Gly) (interchain with G-Cter in SUMO2) cross-links involve residues K918 and K922. The Zn(2+) site is built by C937 and C940. Residues 937–978 (CTICLSILEEGEDVRRLPCMHLFHQVCVDQWLITNKKCPICR) form an RING-type; atypical zinc finger. The segment at 952 to 956 (RLPCM) is ubiquitin binding. Zn(2+) is bound by residues H960 and C963.

Belongs to the Arkadia family. Monomer. Interacts with SMAD6, SMAD7, AXIN1, AXIN2 and SKIL isoform SNON. Interacts with (phosphorylated) SMAD2 and SMAD3. Part of a complex containing RNF111, AXIN1 and SMAD7. Interacts (via SIM domains) with SUMO1 and SUMO2. Ubiquitously expressed.

It is found in the nucleus. Its subcellular location is the cytoplasm. The protein localises to the PML body. The enzyme catalyses S-ubiquitinyl-[E2 ubiquitin-conjugating enzyme]-L-cysteine + [acceptor protein]-L-lysine = [E2 ubiquitin-conjugating enzyme]-L-cysteine + N(6)-ubiquitinyl-[acceptor protein]-L-lysine.. The protein operates within protein modification; protein ubiquitination. Binds free ubiquitin non-covalently via its RING-type zinc finger. Ubiquitin-binding leads to enhance the E3 ubiquitin-protein ligase activity by stabilizing the ubiquitin-conjugating enzyme E2 (donor ubiquitin) in the 'closed' conformation and activating ubiquitin transfer. E3 ubiquitin-protein ligase required for mesoderm patterning during embryonic development. Acts as an enhancer of the transcriptional responses of the SMAD2/SMAD3 effectors, which are activated downstream of BMP. Acts by mediating ubiquitination and degradation of SMAD inhibitors such as SMAD7, inducing their proteasomal degradation and thereby enhancing the transcriptional activity of TGF-beta and BMP. In addition to enhance transcription of SMAD2/SMAD3 effectors, also regulates their turnover by mediating their ubiquitination and subsequent degradation, coupling their activation with degradation, thereby ensuring that only effectors 'in use' are degraded. Activates SMAD3/SMAD4-dependent transcription by triggering signal-induced degradation of SNON isoform of SKIL. Associates with UBE2D2 as an E2 enzyme. Specifically binds polysumoylated chains via SUMO interaction motifs (SIMs) and mediates ubiquitination of sumoylated substrates. Catalyzes 'Lys-63'-linked ubiquitination of sumoylated XPC in response to UV irradiation, promoting nucleotide excision repair. Mediates ubiquitination and degradation of sumoylated PML. The regulation of the BMP-SMAD signaling is however independent of sumoylation and is not dependent of SUMO interaction motifs (SIMs). The polypeptide is E3 ubiquitin-protein ligase Arkadia (Mus musculus (Mouse)).